Here is a 150-residue protein sequence, read N- to C-terminus: D-aminoacyl-tRNA deacylase (150 aa).

Residues 138 to 139 (GP) carry the Gly-cisPro motif, important for rejection of L-amino acids motif.

It belongs to the DTD family. In terms of assembly, homodimer.

It is found in the cytoplasm. The catalysed reaction is glycyl-tRNA(Ala) + H2O = tRNA(Ala) + glycine + H(+). It carries out the reaction a D-aminoacyl-tRNA + H2O = a tRNA + a D-alpha-amino acid + H(+). Its function is as follows. An aminoacyl-tRNA editing enzyme that deacylates mischarged D-aminoacyl-tRNAs. Also deacylates mischarged glycyl-tRNA(Ala), protecting cells against glycine mischarging by AlaRS. Acts via tRNA-based rather than protein-based catalysis; rejects L-amino acids rather than detecting D-amino acids in the active site. By recycling D-aminoacyl-tRNA to D-amino acids and free tRNA molecules, this enzyme counteracts the toxicity associated with the formation of D-aminoacyl-tRNA entities in vivo and helps enforce protein L-homochirality. The chain is D-aminoacyl-tRNA deacylase from Thermosipho melanesiensis (strain DSM 12029 / CIP 104789 / BI429).